The primary structure comprises 153 residues: 6,7-dimethyl-8-ribityllumazine synthase (153 aa).

Residues phenylalanine 22, 56–58, and 80–82 each bind 5-amino-6-(D-ribitylamino)uracil; these read AFE and TVI. Position 85–86 (85–86) interacts with (2S)-2-hydroxy-3-oxobutyl phosphate; sequence ST. The active-site Proton donor is the histidine 88. Phenylalanine 113 serves as a coordination point for 5-amino-6-(D-ribitylamino)uracil. (2S)-2-hydroxy-3-oxobutyl phosphate is bound at residue arginine 127.

Belongs to the DMRL synthase family. As to quaternary structure, forms an icosahedral capsid composed of 60 subunits, arranged as a dodecamer of pentamers.

It catalyses the reaction (2S)-2-hydroxy-3-oxobutyl phosphate + 5-amino-6-(D-ribitylamino)uracil = 6,7-dimethyl-8-(1-D-ribityl)lumazine + phosphate + 2 H2O + H(+). It functions in the pathway cofactor biosynthesis; riboflavin biosynthesis; riboflavin from 2-hydroxy-3-oxobutyl phosphate and 5-amino-6-(D-ribitylamino)uracil: step 1/2. Catalyzes the formation of 6,7-dimethyl-8-ribityllumazine by condensation of 5-amino-6-(D-ribitylamino)uracil with 3,4-dihydroxy-2-butanone 4-phosphate. This is the penultimate step in the biosynthesis of riboflavin. This chain is 6,7-dimethyl-8-ribityllumazine synthase, found in Actinobacillus pleuropneumoniae (Haemophilus pleuropneumoniae).